The chain runs to 295 residues: MPFPPMPPPPAPAPGAQAARQLPRRPCAAGDKKKRPPQRPEGLLSSSWPSATLKRPPARRGPGLDRTQPPAPPGVSPQALPSRARAPATCAPPRPAGSGHSPARTTYAATSAGTGTTAAGTSSGAGPCPDSAARFCLNLTPEAVLVIQKRHLEKQLLARPRRPFPSPSAEPRRLLAPCLPARAAGPRRGGPASDPDAPPTAGQGRRAPPPGAQLLHGGLQVPQLSPRPGALRPMLKVSLLNERHRYDDVEYEEEPEAVDEGLVRKCTEWLRGVESAAAARGRAGALDSRRHLSTL.

Pro residues predominate over residues 1–13 (MPFPPMPPPPAPA). Residues 1–133 (MPFPPMPPPP…GAGPCPDSAA (133 aa)) are disordered. Positions 14-29 (PGAQAARQLPRRPCAA) are enriched in low complexity. Ser47 is subject to Phosphoserine. At Arg83 the chain carries Omega-N-methylarginine. The segment covering 103–126 (ARTTYAATSAGTGTTAAGTSSGAG) has biased composition (low complexity). Arg172 carries the post-translational modification Asymmetric dimethylarginine. A compositionally biased stretch (low complexity) spans 181 to 192 (ARAAGPRRGGPA). Residues 181-227 (ARAAGPRRGGPASDPDAPPTAGQGRRAPPPGAQLLHGGLQVPQLSPR) are disordered. Arg188 is modified (omega-N-methylarginine).

This chain is Proline-rich protein 18 (PRR18), found in Homo sapiens (Human).